The following is a 391-amino-acid chain: Homocysteine-responsive endoplasmic reticulum-resident ubiquitin-like domain member 1 protein (391 aa).

Methionine 1 is modified (N-acetylmethionine). Residues 1–263 (MESETEPEPV…VEEDDEINRD (263 aa)) lie on the Cytoplasmic side of the membrane. Residues 10–72 (VTLLVKSPNQ…LLDHQCLRDL (63 aa)) enclose the Ubiquitin-like domain. The tract at residues 100–126 (KVAESTEEPAGSNRGQYPEDSSSDGLR) is disordered. Polar residues predominate over residues 112–124 (NRGQYPEDSSSDG). Residues 115–200 (QYPEDSSSDG…ASGAFVPPPS (86 aa)) are interaction with UBQLN1. At serine 135 the chain carries Phosphoserine. The interval 170–190 (LSWFQQIYARQYYMQYLAATA) is interaction with SYVN1. Residues 264 to 284 (WLDWTYSAATFSVFLSILYFY) traverse the membrane as a helical segment. Residues 285-289 (SSLSR) lie on the Lumenal side of the membrane. Residues 290 to 310 (FLMVMGATVVMYLHHVGWFPF) form a helical membrane-spanning segment. The Cytoplasmic portion of the chain corresponds to 311–391 (RPRPVQNFPN…LPEGPPAIAN (81 aa)). The disordered stretch occupies residues 318–359 (FPNDGPPPDVVNQDPNNNLQEGTDPETEDPNHLPPDRDVLDG). Over residues 346 to 357 (DPNHLPPDRDVL) the composition is skewed to basic and acidic residues.

In terms of assembly, interacts with PSEN1 and PSEN2. Interacts with UBXN6. Interacts with UBQLN1, UBQLN2 and UBQLN4. Component of the HRD1 complex, which comprises at least SYNV1/HRD1, FAM8A1, HERPUD1/HERP, OS9, SEL1L and UBE2J1. FAM8A1 binding to SYNV1 may promote recruitment of HERPUD1 to the HRD1 complex. Widely expressed; in the brain, expression seems to be restricted to neurons and vascular smooth muscle cells. Present in activated microglia in senile plaques in the brain of patients with Alzheimer disease.

The protein resides in the endoplasmic reticulum membrane. Its function is as follows. Component of the endoplasmic reticulum quality control (ERQC) system also called ER-associated degradation (ERAD) involved in ubiquitin-dependent degradation of misfolded endoplasmic reticulum proteins. Could enhance presenilin-mediated amyloid-beta protein 40 generation. Binds to ubiquilins and this interaction is required for efficient degradation of CD3D via the ERAD pathway. This Homo sapiens (Human) protein is Homocysteine-responsive endoplasmic reticulum-resident ubiquitin-like domain member 1 protein (HERPUD1).